Here is a 698-residue protein sequence, read N- to C-terminus: Elongation factor G (698 aa).

In terms of domain architecture, tr-type G spans 10–285 (AGTRNIGIMA…AVVDFLPNPL (276 aa)). GTP-binding positions include 19–26 (AHIDAGKT), 83–87 (DTPGH), and 137–140 (NKMD).

It belongs to the TRAFAC class translation factor GTPase superfamily. Classic translation factor GTPase family. EF-G/EF-2 subfamily.

The protein resides in the cytoplasm. Functionally, catalyzes the GTP-dependent ribosomal translocation step during translation elongation. During this step, the ribosome changes from the pre-translocational (PRE) to the post-translocational (POST) state as the newly formed A-site-bound peptidyl-tRNA and P-site-bound deacylated tRNA move to the P and E sites, respectively. Catalyzes the coordinated movement of the two tRNA molecules, the mRNA and conformational changes in the ribosome. In Frankia casuarinae (strain DSM 45818 / CECT 9043 / HFP020203 / CcI3), this protein is Elongation factor G.